The chain runs to 91 residues: Parbolysin P6 (91 aa).

3 disulfide bridges follow: Cys16/Cys37, Cys22/Cys33, and Cys47/Cys60.

The protein belongs to the worm cytolysin family. Localized within the skin and proboscis and are most readily isolated from body mucus secretions.

It is found in the secreted. Functionally, cytolysin that shows hemolytic activity (on bovine erythrocytes, HC(50)=5.75 mg/ml). This hemolytic activity is completely inhibited by small unilamelar vesicles composed of PC/PG, PC/PI and PC/PS in 1:1 molar ratios (with at least 100 mg/ml concentration). The polypeptide is Parbolysin P6 (Parborlasia corrugatus (Antarctic nemertean worm)).